A 295-amino-acid chain; its full sequence is Phosphatidylserine decarboxylase proenzyme (295 aa).

Residues Asp-90 and Ser-258 each act as charge relay system; for autoendoproteolytic cleavage activity in the active site. The active-site Schiff-base intermediate with substrate; via pyruvic acid; for decarboxylase activity is the Ser-258. Ser-258 is modified (pyruvic acid (Ser); by autocatalysis).

This sequence belongs to the phosphatidylserine decarboxylase family. PSD-B subfamily. Prokaryotic type I sub-subfamily. In terms of assembly, heterodimer of a large membrane-associated beta subunit and a small pyruvoyl-containing alpha subunit. Requires pyruvate as cofactor. In terms of processing, is synthesized initially as an inactive proenzyme. Formation of the active enzyme involves a self-maturation process in which the active site pyruvoyl group is generated from an internal serine residue via an autocatalytic post-translational modification. Two non-identical subunits are generated from the proenzyme in this reaction, and the pyruvate is formed at the N-terminus of the alpha chain, which is derived from the carboxyl end of the proenzyme. The autoendoproteolytic cleavage occurs by a canonical serine protease mechanism, in which the side chain hydroxyl group of the serine supplies its oxygen atom to form the C-terminus of the beta chain, while the remainder of the serine residue undergoes an oxidative deamination to produce ammonia and the pyruvoyl prosthetic group on the alpha chain. During this reaction, the Ser that is part of the protease active site of the proenzyme becomes the pyruvoyl prosthetic group, which constitutes an essential element of the active site of the mature decarboxylase.

It is found in the cell membrane. It catalyses the reaction a 1,2-diacyl-sn-glycero-3-phospho-L-serine + H(+) = a 1,2-diacyl-sn-glycero-3-phosphoethanolamine + CO2. It functions in the pathway phospholipid metabolism; phosphatidylethanolamine biosynthesis; phosphatidylethanolamine from CDP-diacylglycerol: step 2/2. Its function is as follows. Catalyzes the formation of phosphatidylethanolamine (PtdEtn) from phosphatidylserine (PtdSer). In Blochmanniella pennsylvanica (strain BPEN), this protein is Phosphatidylserine decarboxylase proenzyme.